A 635-amino-acid chain; its full sequence is Ankyrin repeat and SOCS box protein 2 (635 aa).

Residues 8 to 16 form a required for FLNA degradation region; that stretch reads RGSQCTIGQ. The UIM domain maps to 26-45; that stretch reads SEDELVQMAIEQSLADKTRG. ANK repeat units follow at residues 104–133, 137–167, 171–200, 204–233, 237–266, 270–299, 303–332, 336–365, 368–397, 410–439, 440–469, and 476–504; these read APAD…NLAE, EGWL…TIDQ, QEET…EPDI, SRET…DTNH, RGWT…KVES, YGIT…DINT, DNAS…DANK, DGLL…RTRI, SGVS…DVNT, RRSS…DPNR, DVIS…NIDA, and TAFP…DGEP. Ser371 carries the phosphoserine; by MAPK modification. Positions 586–635 constitute an SOCS box domain; it reads IKEKAEPPRPLAHLCRLRVRKAIGKYRIKLLDTLPLPGRLIRYLKYENTQ.

The protein belongs to the ankyrin SOCS box (ASB) family. As to quaternary structure, component of a probable ECS E3 ubiquitin-protein ligase complex which contains CUL5, either RBX1 or RNF7/RBX2, Elongin BC complex (ELOB and ELOC) and ASB2. Interacts with SKP2. Through its interaction with SKP2, likely to bridge the formation of dimeric E3-ubiquitin-protein ligase complexes composed of an ECS complex and an SCF(SKP2) complex. Interacts with JAK2; the interaction targets JAK2 for Notch-mediated proteasomal degradation. Interacts with TCF3/E2A; the interaction is mediated by SKP2 and targets TCF3 for Notch-mediated proteasomal degradation. In terms of assembly, interacts with DES. In terms of processing, monoubiquitinated. Post-translationally, not monoubiquitinated. Phosphorylation at Ser-371 is required for association with FLNA and subsequent FLNA degradation. In terms of tissue distribution, expressed in muscle cells. As to expression, expressed in hematopoietic cells.

It localises to the cytoplasm. The protein localises to the cytoskeleton. It is found in the stress fiber. The protein resides in the myofibril. Its subcellular location is the sarcomere. It localises to the z line. It functions in the pathway protein modification; protein ubiquitination. Functionally, substrate-recognition component of a SCF-like ECS (Elongin-Cullin-SOCS-box protein) E3 ubiquitin-protein ligase complex which mediates the ubiquitination and subsequent proteasomal degradation of target proteins. Mediates Notch-induced ubiquitination and degradation of substrates including TCF3/E2A and JAK2. Required during embryonic heart development for complete heart looping. Required for cardiomyocyte differentiation. Specifically promotes the ubiquitination of SMAD9 and targets it for proteasomal degradation, leading to avoid excessive accumulation of SMAD9. Plays a role in the regulation of NK-cell migration by modulating protein levels of filamin A/FLNA via regulation of its ubiquitination and proteasome degradation. In terms of biological role, involved in myogenic differentiation and targets filamin FLNB for proteasomal degradation but not filamin FLNA. Also targets DES for proteasomal degradation. Acts as a negative regulator of skeletal muscle mass. Its function is as follows. Targets filamins FLNA and FLNB for proteasomal degradation. This leads to enhanced adhesion of hematopoietic cells to fibronectin. Required for FLNA degradation in immature cardiomyocytes which is necessary for actin cytoskeleton remodeling, leading to proper organization of myofibrils and function of mature cardiomyocytes. Required for degradation of FLNA and FLNB in immature dendritic cells (DC) which enhances immature DC migration by promoting DC podosome formation and DC-mediated degradation of the extracellular matrix. Does not promote proteasomal degradation of tyrosine-protein kinases JAK1 or JAK2 in hematopoietic cells. The protein is Ankyrin repeat and SOCS box protein 2 (ASB2) of Homo sapiens (Human).